Consider the following 469-residue polypeptide: Protein RUFY3 (469 aa).

Phosphothreonine is present on residues Thr5 and Thr12. 2 positions are modified to phosphoserine: Ser34 and Ser49. Thr51 is subject to Phosphothreonine. Residues 95 to 227 enclose the RUN domain; the sequence is DSDYAPLQQF…IDANFCMKGE (133 aa). 2 coiled-coil regions span residues 271 to 362 and 422 to 463; these read NRHL…VEKE and KSEL…AANK.

Interacts with PAK1. Interacts (via C-terminus) with Ras-related Rab-5 proteins. Interacts (via C-terminus) with Ras-related Rap-2 proteins. Interacts with PIK3CA and PIK3R1. Interacts (via N-terminus) with FSCN1; this interaction induces neuron axon development. Interacts with DBN1. Interacts (via the second coiled coil) with GTP-, but not GDP-bound ARL8A and ARL8B. Interacts with dynactin/DCTN1 and the dynein intermediate chain DYNC1I1/2. Directly interacts with DYNC1LI1. In terms of processing, isoform 1 is partially phosphorylated. Phosphorylated by PAK1. Expressed in brain (at protein level).

The protein localises to the cytoplasm. Its subcellular location is the endomembrane system. The protein resides in the cell projection. It localises to the invadopodium. It is found in the growth cone. The protein localises to the perikaryon. Its subcellular location is the filopodium. The protein resides in the lamellipodium. It localises to the lysosome. Its function is as follows. ARL8 effector that promotes the coupling of endolysosomes to dynein-dynactin for retrograde transport along microtubules. Acts by binding both GTP-bound ARL8 and dynein-dynactin. In nonneuronal cells, promotes concentration of endolysosomes in the juxtanuclear area. In hippocampal neurons, drives retrograde transport of endolysosomes from the axon to the soma. Plays a role in the generation of neuronal polarity formation and axon growth. Implicated in the formation of a single axon by developing neurons. May inhibit the formation of additional axons by inhibition of PI3K in minor neuronal processes. Plays a role in the formation of F-actin-enriched protrusive structures at the cell periphery. Plays a role in cytoskeletal organization by regulating the subcellular localization of FSCN1 and DBN1 at axonal growth cones. The chain is Protein RUFY3 from Rattus norvegicus (Rat).